The following is a 131-amino-acid chain: Profilin-11 (131 aa).

The cysteines at positions 13 and 115 are disulfide-linked. The Involved in PIP2 interaction motif lies at 81–97 (AVIRGKKGSGGITVKKT). Threonine 111 carries the phosphothreonine modification.

The protein belongs to the profilin family. In terms of assembly, occurs in many kinds of cells as a complex with monomeric actin in a 1:1 ratio. In terms of processing, phosphorylated by MAP kinases.

The protein resides in the cytoplasm. It localises to the cytoskeleton. Binds to actin and affects the structure of the cytoskeleton. At high concentrations, profilin prevents the polymerization of actin, whereas it enhances it at low concentrations. In Zea mays (Maize), this protein is Profilin-11.